A 332-amino-acid polypeptide reads, in one-letter code: Cysteine and histidine-rich domain-containing protein 1 (332 aa).

Residue alanine 2 is modified to N-acetylalanine. The tract at residues 2 to 77 (ALLCYNRGCG…KPPESVKPEV (76 aa)) is interaction with PPP5C. Zn(2+) contacts are provided by cysteine 5, cysteine 10, cysteine 24, histidine 27, cysteine 42, and cysteine 43. CHORD domains are found at residues 5–64 (CYNR…KGRH) and 157–216 (CKNG…KGKH). Threonine 47 is subject to Phosphothreonine. Serine 51 carries the post-translational modification Phosphoserine. The Zn(2+) site is built by cysteine 59, histidine 64, cysteine 157, cysteine 162, cysteine 176, histidine 179, cysteine 194, cysteine 195, cysteine 211, and histidine 216. A disordered region spans residues 62–81 (GRHNSEKPPESVKPEVKTTE). The span at 64–81 (HNSEKPPESVKPEVKTTE) shows a compositional bias: basic and acidic residues. The tract at residues 65-316 (NSEKPPESVK…AEPMQWASLE (252 aa)) is interaction with HSP90AA1 and HSP90AB1. The 90-residue stretch at 227 to 316 (VVPCRHDWHQ…AEPMQWASLE (90 aa)) folds into the CS domain.

Interacts with HSP90AA1, HSP90AB1, PPP5C, ROCK1 and ROCK2.

Regulates centrosome duplication, probably by inhibiting the kinase activity of ROCK2. Proposed to act as co-chaperone for HSP90. May play a role in the regulation of NOD1 via a HSP90 chaperone complex. In vitro, has intrinsic chaperone activity. This function may be achieved by inhibiting association of ROCK2 with NPM1. Plays a role in ensuring the localization of the tyrosine kinase receptor EGFR to the plasma membrane, and thus ensures the subsequent regulation of EGFR activity and EGF-induced actin cytoskeleton remodeling. Involved in stress response. Prevents tumorigenesis. The protein is Cysteine and histidine-rich domain-containing protein 1 (CHORDC1) of Pongo abelii (Sumatran orangutan).